A 412-amino-acid chain; its full sequence is L-threonine:uridine-5'-aldehyde transaldolase (412 aa).

N6-(pyridoxal phosphate)lysine is present on Lys229.

This sequence belongs to the SHMT family. Requires pyridoxal 5'-phosphate as cofactor.

The catalysed reaction is uridine-5'-aldehyde + L-threonine = (5'S,6'S)-C-glycyluridine + acetaldehyde. It participates in antibiotic biosynthesis. In terms of biological role, transaldolase involved in the biosynthesis of the capuramycin-type nucleoside antibiotic A-102395. Catalyzes the condensation of L-threonine and uridine-5'-aldehyde to form 5'-C-glycyluridine (GlyU). This chain is L-threonine:uridine-5'-aldehyde transaldolase, found in Amycolatopsis sp.